The sequence spans 907 residues: DNA mismatch repair protein MutS (907 aa).

Position 656–663 (656–663) interacts with ATP; sequence GPNMAGKS.

Belongs to the DNA mismatch repair MutS family.

This protein is involved in the repair of mismatches in DNA. It is possible that it carries out the mismatch recognition step. This protein has a weak ATPase activity. This is DNA mismatch repair protein MutS from Nitrobacter hamburgensis (strain DSM 10229 / NCIMB 13809 / X14).